Consider the following 474-residue polypeptide: Glycogen synthase (474 aa).

Lys-12 serves as a coordination point for ADP-alpha-D-glucose.

The protein belongs to the glycosyltransferase 1 family. Bacterial/plant glycogen synthase subfamily.

It carries out the reaction [(1-&gt;4)-alpha-D-glucosyl](n) + ADP-alpha-D-glucose = [(1-&gt;4)-alpha-D-glucosyl](n+1) + ADP + H(+). It participates in glycan biosynthesis; glycogen biosynthesis. In terms of biological role, synthesizes alpha-1,4-glucan chains using ADP-glucose. The polypeptide is Glycogen synthase (Xanthomonas campestris pv. campestris (strain 8004)).